A 423-amino-acid chain; its full sequence is Transducer protein Htr13 (423 aa).

Positions 1 to 19 are enriched in polar residues; that stretch reads MTGPDNSLTDPSASPSTPV. The disordered stretch occupies residues 1–21; it reads MTGPDNSLTDPSASPSTPVAS. Residues 152 to 388 enclose the Methyl-accepting transducer domain; it reads AVAELIERAR…ELTMMIDEAA (237 aa).

The protein belongs to the methyl-accepting chemotaxis (MCP) protein family. Post-translationally, methylated by CheR.

Its subcellular location is the cytoplasm. Potentially involved in chemo- or phototactic signal transduction. The chain is Transducer protein Htr13 (htr13) from Halobacterium salinarum (strain ATCC 29341 / DSM 671 / R1).